Reading from the N-terminus, the 553-residue chain is Protein PALS2 (553 aa).

2 consecutive L27 domains span residues 1 to 48 (MQQV…EDSK) and 49 to 107 (LEAV…YDSP). The 80-residue stretch at 129–208 (ILGIHKKAGE…SVTLKILPSY (80 aa)) folds into the PDZ domain. The 70-residue stretch at 228-297 (VRQVFVKCHF…PSQFLEEKRK (70 aa)) folds into the SH3 domain. The 188-residue stretch at 351–538 (RKTLVLIGAQ…AFEKLQTAIE (188 aa)) folds into the Guanylate kinase-like domain. At Tyr-513 the chain carries Phosphotyrosine.

The protein belongs to the MAGUK family. In terms of assembly, interacts with CADM1. Interacts with the LIN7 proteins.

It localises to the membrane. The chain is Protein PALS2 from Mus musculus (Mouse).